A 123-amino-acid chain; its full sequence is Small ribosomal subunit protein uS13 (123 aa).

Positions 96–123 (GLPVRGQRTKTNARTRKGPKKTVAGKKK) are disordered.

It belongs to the universal ribosomal protein uS13 family. Part of the 30S ribosomal subunit. Forms a loose heterodimer with protein S19. Forms two bridges to the 50S subunit in the 70S ribosome.

Functionally, located at the top of the head of the 30S subunit, it contacts several helices of the 16S rRNA. In the 70S ribosome it contacts the 23S rRNA (bridge B1a) and protein L5 of the 50S subunit (bridge B1b), connecting the 2 subunits; these bridges are implicated in subunit movement. Contacts the tRNAs in the A and P-sites. In Nocardia farcinica (strain IFM 10152), this protein is Small ribosomal subunit protein uS13.